A 252-amino-acid polypeptide reads, in one-letter code: Enolase-phosphatase E1 (252 aa).

Mg(2+) is bound by residues Asp-18 and Glu-20. Residues 149 to 150 and Lys-184 contribute to the substrate site; that span reads SS. A Mg(2+)-binding site is contributed by Asp-209.

This sequence belongs to the HAD-like hydrolase superfamily. MasA/MtnC family. As to quaternary structure, monomer. The cofactor is Mg(2+).

It is found in the cytoplasm. Its subcellular location is the nucleus. The enzyme catalyses 5-methylsulfanyl-2,3-dioxopentyl phosphate + H2O = 1,2-dihydroxy-5-(methylsulfanyl)pent-1-en-3-one + phosphate. It functions in the pathway amino-acid biosynthesis; L-methionine biosynthesis via salvage pathway; L-methionine from S-methyl-5-thio-alpha-D-ribose 1-phosphate: step 3/6. It participates in amino-acid biosynthesis; L-methionine biosynthesis via salvage pathway; L-methionine from S-methyl-5-thio-alpha-D-ribose 1-phosphate: step 4/6. Bifunctional enzyme that catalyzes the enolization of 2,3-diketo-5-methylthiopentyl-1-phosphate (DK-MTP-1-P) into the intermediate 2-hydroxy-3-keto-5-methylthiopentenyl-1-phosphate (HK-MTPenyl-1-P), which is then dephosphorylated to form the acireductone 1,2-dihydroxy-3-keto-5-methylthiopentene (DHK-MTPene). In Naegleria gruberi (Amoeba), this protein is Enolase-phosphatase E1.